The chain runs to 135 residues: Interleukin-4 (135 aa).

The signal sequence occupies residues 1–24; the sequence is MGLTYQLIPVLVCLLVCTSHFAHG. 3 disulfides stabilise this stretch: Cys-27-Cys-135, Cys-48-Cys-85, and Cys-70-Cys-105. Asn-62 is a glycosylation site (N-linked (GlcNAc...) asparagine).

It belongs to the IL-4/IL-13 family.

It is found in the secreted. Its function is as follows. Participates in at least several B-cell activation processes as well as of other cell types. It is a costimulator of DNA-synthesis. It induces the expression of class II MHC molecules on resting B-cells. It enhances both secretion and cell surface expression of IgE and IgG1. It also regulates the expression of the low affinity Fc receptor for IgE (CD23) on both lymphocytes and monocytes. Positively regulates IL31RA expression in macrophages. Stimulates autophagy in dendritic cells by interfering with mTORC1 signaling and through the induction of RUFY4. This Boselaphus tragocamelus (Nilgai) protein is Interleukin-4 (IL4).